The following is a 428-amino-acid chain: METIFALATAQGKAGVAVIRVSGPHAIEIGEKLTRRTLPARGMIFSKLKDSAGEILDEALVLSFTSPDSFTGENIVEFQLHGSIAVVSAVMSAIEETGVARLADPGEFTRRALDNGKLDLTQVEGLADLIDAETEAQRKQAQVILAGTLGDLADRWRTDLIRAASLIEVTIDFADEEVPVDVTPEVKQLLSGVLHDIEKEVDGVAIAERIREGFEVAIVGSPNVGKSTLLNALAGRTAAITSEYAGTTRDVIEVRMDLAGLPVTLLDTAGLRETDDHVEGIGIRLAQERAERADIRVFLAEEDESFSIQMREGDLRLLPKADERRSAKGAISGRTGQGVDDLVSRISDTLRNRTAHDGIATRARHRETMNRAVLSLRQAIEVVEQGPEFYDLAAEDMRSAIRALELLVGRINVENLLDEIFSSFCLGK.

(6S)-5-formyl-5,6,7,8-tetrahydrofolate contacts are provided by Arg20, Glu77, and Lys117. Positions Gly213–Arg351 constitute a TrmE-type G domain. GTP is bound by residues Asn223–Thr228, Ser242–Thr248, and Asp267–Gly270. Residues Ser227 and Thr248 each contribute to the Mg(2+) site. Lys428 contributes to the (6S)-5-formyl-5,6,7,8-tetrahydrofolate binding site.

This sequence belongs to the TRAFAC class TrmE-Era-EngA-EngB-Septin-like GTPase superfamily. TrmE GTPase family. As to quaternary structure, homodimer. Heterotetramer of two MnmE and two MnmG subunits. K(+) is required as a cofactor.

It localises to the cytoplasm. In terms of biological role, exhibits a very high intrinsic GTPase hydrolysis rate. Involved in the addition of a carboxymethylaminomethyl (cmnm) group at the wobble position (U34) of certain tRNAs, forming tRNA-cmnm(5)s(2)U34. This is tRNA modification GTPase MnmE from Ruegeria sp. (strain TM1040) (Silicibacter sp.).